We begin with the raw amino-acid sequence, 294 residues long: Nucleotide-binding protein LCA_0526 (294 aa).

12–19 (GMSGAGKT) provides a ligand contact to ATP. 62–65 (DLRS) serves as a coordination point for GTP.

The protein belongs to the RapZ-like family.

Displays ATPase and GTPase activities. This chain is Nucleotide-binding protein LCA_0526, found in Latilactobacillus sakei subsp. sakei (strain 23K) (Lactobacillus sakei subsp. sakei).